The following is a 250-amino-acid chain: 3-deoxy-manno-octulosonate cytidylyltransferase (250 aa).

It belongs to the KdsB family.

Its subcellular location is the cytoplasm. It carries out the reaction 3-deoxy-alpha-D-manno-oct-2-ulosonate + CTP = CMP-3-deoxy-beta-D-manno-octulosonate + diphosphate. It functions in the pathway nucleotide-sugar biosynthesis; CMP-3-deoxy-D-manno-octulosonate biosynthesis; CMP-3-deoxy-D-manno-octulosonate from 3-deoxy-D-manno-octulosonate and CTP: step 1/1. It participates in bacterial outer membrane biogenesis; lipopolysaccharide biosynthesis. In terms of biological role, activates KDO (a required 8-carbon sugar) for incorporation into bacterial lipopolysaccharide in Gram-negative bacteria. The protein is 3-deoxy-manno-octulosonate cytidylyltransferase of Pectobacterium atrosepticum (strain SCRI 1043 / ATCC BAA-672) (Erwinia carotovora subsp. atroseptica).